The following is a 171-amino-acid chain: Peptide methionine sulfoxide reductase MsrA (171 aa).

C13 is an active-site residue.

This sequence belongs to the MsrA Met sulfoxide reductase family.

It carries out the reaction L-methionyl-[protein] + [thioredoxin]-disulfide + H2O = L-methionyl-(S)-S-oxide-[protein] + [thioredoxin]-dithiol. It catalyses the reaction [thioredoxin]-disulfide + L-methionine + H2O = L-methionine (S)-S-oxide + [thioredoxin]-dithiol. In terms of biological role, has an important function as a repair enzyme for proteins that have been inactivated by oxidation. Catalyzes the reversible oxidation-reduction of methionine sulfoxide in proteins to methionine. The sequence is that of Peptide methionine sulfoxide reductase MsrA from Mycobacterium ulcerans (strain Agy99).